Consider the following 270-residue polypeptide: Ethanolamine ammonia-lyase small subunit (270 aa).

Positions 166, 187, and 216 each coordinate adenosylcob(III)alamin.

This sequence belongs to the EutC family. The basic unit is a heterodimer which dimerizes to form tetramers. The heterotetramers trimerize; 6 large subunits form a core ring with 6 small subunits projecting outwards. Requires adenosylcob(III)alamin as cofactor.

Its subcellular location is the bacterial microcompartment. It catalyses the reaction ethanolamine = acetaldehyde + NH4(+). It functions in the pathway amine and polyamine degradation; ethanolamine degradation. Its function is as follows. Catalyzes the deamination of various vicinal amino-alcohols to oxo compounds. Allows this organism to utilize ethanolamine as the sole source of nitrogen and carbon in the presence of external vitamin B12. This chain is Ethanolamine ammonia-lyase small subunit, found in Ralstonia nicotianae (strain ATCC BAA-1114 / GMI1000) (Ralstonia solanacearum).